The following is a 547-amino-acid chain: Chaperonin GroEL (547 aa).

ATP contacts are provided by residues 30–33 (TLGP), K51, 87–91 (DGTTT), G415, and D495.

The protein belongs to the chaperonin (HSP60) family. As to quaternary structure, forms a cylinder of 14 subunits composed of two heptameric rings stacked back-to-back. Interacts with the co-chaperonin GroES.

It is found in the cytoplasm. It catalyses the reaction ATP + H2O + a folded polypeptide = ADP + phosphate + an unfolded polypeptide.. Functionally, together with its co-chaperonin GroES, plays an essential role in assisting protein folding. The GroEL-GroES system forms a nano-cage that allows encapsulation of the non-native substrate proteins and provides a physical environment optimized to promote and accelerate protein folding. The chain is Chaperonin GroEL from Bartonella quintana (strain Toulouse) (Rochalimaea quintana).